Consider the following 118-residue polypeptide: Hydrogenase maturation factor HypA (118 aa).

His2 is a Ni(2+) binding site. Residues Cys73, Cys76, Cys89, and Cys92 each contribute to the Zn(2+) site.

It belongs to the HypA/HybF family.

In terms of biological role, involved in the maturation of [NiFe] hydrogenases. Required for nickel insertion into the metal center of the hydrogenase. This chain is Hydrogenase maturation factor HypA, found in Shewanella oneidensis (strain ATCC 700550 / JCM 31522 / CIP 106686 / LMG 19005 / NCIMB 14063 / MR-1).